The following is a 732-amino-acid chain: Catalase-peroxidase (732 aa).

The interval 1 to 23 (MSEQSRCPVTGRTADSPATGSGL) is disordered. A cross-link (tryptophyl-tyrosyl-methioninium (Trp-Tyr) (with M-246)) is located at residues 97–220 (WHSAGTYRTS…LAAVQMGLIY (124 aa)). The active-site Proton acceptor is the His-98. A cross-link (tryptophyl-tyrosyl-methioninium (Tyr-Met) (with W-97)) is located at residues 220 to 246 (YVNPEGPDGKPDPVAAGRDIRETFARM). His-261 is a binding site for heme b.

This sequence belongs to the peroxidase family. Peroxidase/catalase subfamily. In terms of assembly, homodimer or homotetramer. The cofactor is heme b. Post-translationally, formation of the three residue Trp-Tyr-Met cross-link is important for the catalase, but not the peroxidase activity of the enzyme.

It carries out the reaction H2O2 + AH2 = A + 2 H2O. The catalysed reaction is 2 H2O2 = O2 + 2 H2O. Its function is as follows. Bifunctional enzyme with both catalase and broad-spectrum peroxidase activity. This chain is Catalase-peroxidase, found in Prosthecochloris aestuarii (strain DSM 271 / SK 413).